The primary structure comprises 268 residues: Tryptophan synthase alpha chain (268 aa).

Active-site proton acceptor residues include Glu-49 and Asp-60.

This sequence belongs to the TrpA family. In terms of assembly, tetramer of two alpha and two beta chains.

The enzyme catalyses (1S,2R)-1-C-(indol-3-yl)glycerol 3-phosphate + L-serine = D-glyceraldehyde 3-phosphate + L-tryptophan + H2O. It participates in amino-acid biosynthesis; L-tryptophan biosynthesis; L-tryptophan from chorismate: step 5/5. Functionally, the alpha subunit is responsible for the aldol cleavage of indoleglycerol phosphate to indole and glyceraldehyde 3-phosphate. The chain is Tryptophan synthase alpha chain from Escherichia coli O17:K52:H18 (strain UMN026 / ExPEC).